Here is a 471-residue protein sequence, read N- to C-terminus: 3-isopropylmalate dehydratase large subunit (471 aa).

The [4Fe-4S] cluster site is built by cysteine 347, cysteine 407, and cysteine 410.

Belongs to the aconitase/IPM isomerase family. LeuC type 1 subfamily. As to quaternary structure, heterodimer of LeuC and LeuD. [4Fe-4S] cluster serves as cofactor.

It carries out the reaction (2R,3S)-3-isopropylmalate = (2S)-2-isopropylmalate. It participates in amino-acid biosynthesis; L-leucine biosynthesis; L-leucine from 3-methyl-2-oxobutanoate: step 2/4. Its function is as follows. Catalyzes the isomerization between 2-isopropylmalate and 3-isopropylmalate, via the formation of 2-isopropylmaleate. The polypeptide is 3-isopropylmalate dehydratase large subunit (Anoxybacillus flavithermus (strain DSM 21510 / WK1)).